Reading from the N-terminus, the 399-residue chain is Acetate kinase (399 aa).

Asn-8 lines the Mg(2+) pocket. ATP is bound at residue Lys-15. Arg-89 is a binding site for substrate. The active-site Proton donor/acceptor is Asp-147. ATP-binding positions include 207-211, 284-286, and 332-336; these read HMGNG, DMR, and GIGEN. Glu-385 lines the Mg(2+) pocket.

It belongs to the acetokinase family. As to quaternary structure, homodimer. Requires Mg(2+) as cofactor. Mn(2+) is required as a cofactor.

It localises to the cytoplasm. It carries out the reaction acetate + ATP = acetyl phosphate + ADP. It participates in metabolic intermediate biosynthesis; acetyl-CoA biosynthesis; acetyl-CoA from acetate: step 1/2. Its function is as follows. Catalyzes the formation of acetyl phosphate from acetate and ATP. Can also catalyze the reverse reaction. This chain is Acetate kinase, found in Streptococcus mutans serotype c (strain ATCC 700610 / UA159).